The chain runs to 391 residues: 4-coumarate--CoA ligase (391 aa).

This sequence belongs to the ATP-dependent AMP-binding enzyme family.

The enzyme catalyses (E)-4-coumarate + ATP + CoA = (E)-4-coumaroyl-CoA + AMP + diphosphate. Functionally, converts p-coumaric acid into p-coumaryl CoA. This is necessary for the activation of the photoactive yellow protein (PYP) chromophore. The polypeptide is 4-coumarate--CoA ligase (pcl) (Halorhodospira halophila (Ectothiorhodospira halophila)).